A 396-amino-acid polypeptide reads, in one-letter code: Enoyl-[acyl-carrier-protein] reductase [NADH] (396 aa).

NAD(+) contacts are provided by residues 47 to 52, 73 to 74, 110 to 111, and 138 to 139; these read GASTGF, FE, DA, and LA. Substrate is bound at residue tyrosine 224. Tyrosine 234 functions as the Proton donor in the catalytic mechanism. NAD(+)-binding positions include lysine 243 and 272–274; that span reads LVT.

It belongs to the TER reductase family. As to quaternary structure, monomer.

It carries out the reaction a 2,3-saturated acyl-[ACP] + NAD(+) = a (2E)-enoyl-[ACP] + NADH + H(+). It functions in the pathway lipid metabolism; fatty acid biosynthesis. In terms of biological role, involved in the final reduction of the elongation cycle of fatty acid synthesis (FAS II). Catalyzes the reduction of a carbon-carbon double bond in an enoyl moiety that is covalently linked to an acyl carrier protein (ACP). The protein is Enoyl-[acyl-carrier-protein] reductase [NADH] of Flavobacterium johnsoniae (strain ATCC 17061 / DSM 2064 / JCM 8514 / BCRC 14874 / CCUG 350202 / NBRC 14942 / NCIMB 11054 / UW101) (Cytophaga johnsonae).